The primary structure comprises 334 residues: Fructose-1,6-bisphosphatase class 1 (334 aa).

Mg(2+) contacts are provided by Glu91, Asp113, Leu115, and Asp116. Substrate-binding positions include 116-119 (DGSS), Asn208, and Lys274. Mg(2+) is bound at residue Glu280.

The protein belongs to the FBPase class 1 family. As to quaternary structure, homotetramer. The cofactor is Mg(2+).

The protein localises to the cytoplasm. It carries out the reaction beta-D-fructose 1,6-bisphosphate + H2O = beta-D-fructose 6-phosphate + phosphate. Its pathway is carbohydrate biosynthesis; gluconeogenesis. This chain is Fructose-1,6-bisphosphatase class 1, found in Herminiimonas arsenicoxydans.